The chain runs to 282 residues: Reaction center protein L chain (282 aa).

Over Ala2 to Val32 the chain is Cytoplasmic. A helical transmembrane segment spans residues Gly33–Leu56. Over Gln57 to Lys83 the chain is Periplasmic. The chain crosses the membrane as a helical span at residues Gly84–Leu112. The Cytoplasmic portion of the chain corresponds to Gly113–Tyr116. Residues His117 to Met139 form a helical membrane-spanning segment. The Periplasmic segment spans residues Met140–Asn171. 2 residues coordinate (7R,8Z)-bacteriochlorophyll b: His154 and His174. The helical transmembrane segment at Pro172–Ala199 threads the bilayer. His191 is a binding site for Fe cation. At Asn200–Ile225 the chain is on the cytoplasmic side. Phe217 serves as a coordination point for a ubiquinone. A helical transmembrane segment spans residues Gly226–Ile251. A Fe cation-binding site is contributed by His231. Residues Thr252 to Gly282 lie on the Periplasmic side of the membrane.

The protein belongs to the reaction center PufL/M/PsbA/D family. As to quaternary structure, reaction center is composed of four bacteriochlorophylls, two bacteriopheophytins, two ubiquinones, one iron, and three highly hydrophobic polypeptide chains (designated L, M, and H).

Its subcellular location is the cellular chromatophore membrane. Functionally, the reaction center is a membrane-bound complex that mediates the initial photochemical event in the electron transfer process of photosynthesis. The sequence is that of Reaction center protein L chain (pufL) from Cereibacter sphaeroides (strain ATCC 17023 / DSM 158 / JCM 6121 / CCUG 31486 / LMG 2827 / NBRC 12203 / NCIMB 8253 / ATH 2.4.1.) (Rhodobacter sphaeroides).